The sequence spans 380 residues: Ribosomal RNA large subunit methyltransferase G (380 aa).

It belongs to the methyltransferase superfamily. RlmG family.

It localises to the cytoplasm. It carries out the reaction guanosine(1835) in 23S rRNA + S-adenosyl-L-methionine = N(2)-methylguanosine(1835) in 23S rRNA + S-adenosyl-L-homocysteine + H(+). In terms of biological role, specifically methylates the guanine in position 1835 (m2G1835) of 23S rRNA. In Streptomyces avermitilis (strain ATCC 31267 / DSM 46492 / JCM 5070 / NBRC 14893 / NCIMB 12804 / NRRL 8165 / MA-4680), this protein is Ribosomal RNA large subunit methyltransferase G.